The following is a 121-amino-acid chain: Large ribosomal subunit protein uL14 (121 aa).

Belongs to the universal ribosomal protein uL14 family. Part of the 50S ribosomal subunit. Forms a cluster with proteins L3 and L19. In the 70S ribosome, L14 and L19 interact and together make contacts with the 16S rRNA in bridges B5 and B8.

Its function is as follows. Binds to 23S rRNA. Forms part of two intersubunit bridges in the 70S ribosome. This chain is Large ribosomal subunit protein uL14, found in Legionella pneumophila (strain Paris).